The primary structure comprises 456 residues: Keratin, type I cytoskeletal 12 (456 aa).

A compositionally biased stretch (polar residues) spans 1–19 (MSLSVRTSALSRRSSSQNG). Positions 1–25 (MSLSVRTSALSRRSSSQNGVAGRPW) are disordered. The segment at 1–114 (MSLSVRTSAL…GNDGGLLSGS (114 aa)) is head. Positions 115-150 (EKETMQNLNDRLASYLGKVRALEEANAELENKIREW) are coil 1A. One can recognise an IF rod domain in the interval 115–402 (EKETMQNLND…RLLEGDTQGD (288 aa)). Residues 154–171 (RRTGDSGSQSDYSKYYPL) are linker 1. A coil 1B region spans residues 172–263 (IEDLKNKIIS…KNHEEELQSF (92 aa)). A linker 12 region spans residues 264 to 286 (QAGGPGEVNVEMDAAPGVDLTKS). The coil 2 stretch occupies residues 287–397 (GELRKEINSN…IETYRRLLEG (111 aa)). The tract at residues 398-456 (DTQGDGFDESLSLTVSKPQAPSVDSSKDPNKTRKIKTVVQEIVNGEVVSSQVQELEEAM) is tail. The interval 405 to 430 (DESLSLTVSKPQAPSVDSSKDPNKTR) is disordered. Residues 408 to 421 (LSLTVSKPQAPSVD) are compositionally biased toward polar residues.

Belongs to the intermediate filament family. As to quaternary structure, heterotetramer of two type I and two type II keratins. Keratin-3 associates with keratin-12.

Its function is as follows. Involved in corneal epithelium organization, integrity and corneal keratin expression. The chain is Keratin, type I cytoskeletal 12 from Rattus norvegicus (Rat).